The sequence spans 502 residues: Protein MGF 505-5R (502 aa).

It belongs to the asfivirus MGF 505 family.

In terms of biological role, plays a role in virus cell tropism, and may be required for efficient virus replication in macrophages. The polypeptide is Protein MGF 505-5R (Ornithodoros (relapsing fever ticks)).